The sequence spans 418 residues: Tektin-1 (418 aa).

4 coiled-coil regions span residues Asn-20–Glu-107, Gln-134–Asp-177, Asn-266–Gly-308, and Val-332–Ile-383.

This sequence belongs to the tektin family. In terms of assembly, microtubule inner protein component of sperm flagellar doublet microtubules. In terms of processing, ubiquitinated, leading to its degradation. Deubiquitinated by USP16, promoting its stability. In terms of tissue distribution, predominantly expressed in testis.

Its subcellular location is the cytoplasm. The protein resides in the cytoskeleton. It is found in the cilium axoneme. It localises to the flagellum axoneme. Functionally, microtubule inner protein (MIP) part of the dynein-decorated doublet microtubules (DMTs) in cilia and flagellar axoneme. Forms filamentous polymers in the walls of ciliary and flagellar microtubules. The chain is Tektin-1 (Tekt1) from Rattus norvegicus (Rat).